We begin with the raw amino-acid sequence, 113 residues long: Large ribosomal subunit protein P1z (113 aa).

Residues 87–113 (AAAPAKEEKKDEPAEESDGDLGFGLFD) form a disordered region. Ser-103 carries the post-translational modification Phosphoserine.

Belongs to the eukaryotic ribosomal protein P1/P2 family. P1 and P2 exist as dimers at the large ribosomal subunit.

Functionally, plays an important role in the elongation step of protein synthesis. The chain is Large ribosomal subunit protein P1z (RPP1B) from Arabidopsis thaliana (Mouse-ear cress).